Consider the following 428-residue polypeptide: Enolase (428 aa).

Glutamine 163 lines the (2R)-2-phosphoglycerate pocket. The active-site Proton donor is the glutamate 205. Residues aspartate 242, glutamate 285, and aspartate 312 each contribute to the Mg(2+) site. Positions 337, 366, 367, and 388 each coordinate (2R)-2-phosphoglycerate. Lysine 337 acts as the Proton acceptor in catalysis.

Belongs to the enolase family. Component of the RNA degradosome, a multiprotein complex involved in RNA processing and mRNA degradation. Requires Mg(2+) as cofactor.

The protein localises to the cytoplasm. It localises to the secreted. It is found in the cell surface. It catalyses the reaction (2R)-2-phosphoglycerate = phosphoenolpyruvate + H2O. It participates in carbohydrate degradation; glycolysis; pyruvate from D-glyceraldehyde 3-phosphate: step 4/5. Catalyzes the reversible conversion of 2-phosphoglycerate (2-PG) into phosphoenolpyruvate (PEP). It is essential for the degradation of carbohydrates via glycolysis. This chain is Enolase, found in Halorhodospira halophila (strain DSM 244 / SL1) (Ectothiorhodospira halophila (strain DSM 244 / SL1)).